A 362-amino-acid chain; its full sequence is Homoserine O-acetyltransferase FUB5 (362 aa).

The AB hydrolase-1 domain occupies 12–335 (NVMIICHALS…VSDDGHDAFL (324 aa)). Ser-110 (nucleophile) is an active-site residue. Residues 195 to 232 (RFGRDTGNKKKTQQQDSKTIPNNGTPIHSQGGADETPV) are disordered. The segment covering 208-222 (QQDSKTIPNNGTPIH) has biased composition (polar residues). Residues Asp-302 and His-331 contribute to the active site.

The protein belongs to the AB hydrolase superfamily. MetX family.

The enzyme catalyses L-homoserine + acetyl-CoA = O-acetyl-L-homoserine + CoA. The protein operates within mycotoxin biosynthesis. In terms of biological role, homoserine O-acetyltransferase; part of the gene cluster that mediates the biosynthesis of fusaric acid, a mycotoxin with low to moderate toxicity to animals and humans, but with high phytotoxic properties. L-aspartate is suggested as fusaric acid amino acid precursor that is activated and further processed to O-acetyl-L-homoserine by cluster enzymes aspartate kinase FUB3 and homoserine O-acetyltransferase FUB5, as well as enzymes of the primary metabolism. The polyketide synthase (PKS) FUB1 generates the triketide trans-2-hexenal which is presumptively released by the hydrolase FUB4 and linked to the NRPS-bound amino acid precursor by NAD(P)-dependent dehydrogenase FUB6. FUB1, FUB4, and the non-canonical NRPS Fub8 may form an enzyme complex. Further processing of the NRPS-bound intermediate might be carried out by FUB6 and the O-acetylhomoserine FUB7, enabling a spontaneous electrocyclization to close the carbon backbone of fusaric acid. Dihydrofusaric acid is likely to be released via reduction by the thioester reductase (TR) domain of FUB8 whereupon the final oxidation to fusaric acid may (also) be performed by the FMN-dependent dehydrogenase FUB9. This chain is Homoserine O-acetyltransferase FUB5, found in Fusarium oxysporum f. sp. lycopersici (strain 4287 / CBS 123668 / FGSC 9935 / NRRL 34936) (Fusarium vascular wilt of tomato).